A 673-amino-acid polypeptide reads, in one-letter code: UvrABC system protein B (673 aa).

The 389-residue stretch at 26–414 (ANFEAGLAKQ…AGEVTELVVR (389 aa)) folds into the Helicase ATP-binding domain. 39–46 (GVTGSGKT) is an ATP binding site. Residues 92 to 115 (YYDYYQPEAYVPSSDTFIEKDSSI) carry the Beta-hairpin motif. The Helicase C-terminal domain occupies 431–597 (QVDDLMSEVH…SVERPIADIM (167 aa)). 2 stretches are compositionally biased toward basic and acidic residues: residues 600-609 (ARDDAAEKKS) and 618-628 (HVAEETPDYRA). Residues 600–628 (ARDDAAEKKSGKGRSKSRHVAEETPDYRA) are disordered. The 36-residue stretch at 635–670 (AGKLKSLEQKMYQHAKDLEFEAAAQIRDQIQKLKAA) folds into the UVR domain.

This sequence belongs to the UvrB family. In terms of assembly, forms a heterotetramer with UvrA during the search for lesions. Interacts with UvrC in an incision complex.

Its subcellular location is the cytoplasm. The UvrABC repair system catalyzes the recognition and processing of DNA lesions. A damage recognition complex composed of 2 UvrA and 2 UvrB subunits scans DNA for abnormalities. Upon binding of the UvrA(2)B(2) complex to a putative damaged site, the DNA wraps around one UvrB monomer. DNA wrap is dependent on ATP binding by UvrB and probably causes local melting of the DNA helix, facilitating insertion of UvrB beta-hairpin between the DNA strands. Then UvrB probes one DNA strand for the presence of a lesion. If a lesion is found the UvrA subunits dissociate and the UvrB-DNA preincision complex is formed. This complex is subsequently bound by UvrC and the second UvrB is released. If no lesion is found, the DNA wraps around the other UvrB subunit that will check the other stand for damage. The chain is UvrABC system protein B from Xanthomonas axonopodis pv. citri (strain 306).